Reading from the N-terminus, the 155-residue chain is Putative pre-16S rRNA nuclease (155 aa).

The protein belongs to the YqgF nuclease family.

Its subcellular location is the cytoplasm. Its function is as follows. Could be a nuclease involved in processing of the 5'-end of pre-16S rRNA. The sequence is that of Putative pre-16S rRNA nuclease from Xanthomonas campestris pv. campestris (strain 8004).